We begin with the raw amino-acid sequence, 992 residues long: Probable RNA-dependent RNA polymerase 3 (992 aa).

A disordered region spans residues Pro88 to Asp113.

Belongs to the RdRP family.

It carries out the reaction RNA(n) + a ribonucleoside 5'-triphosphate = RNA(n+1) + diphosphate. Functionally, probably involved in the RNA silencing pathway and required for the generation of small interfering RNAs (siRNAs). In Arabidopsis thaliana (Mouse-ear cress), this protein is Probable RNA-dependent RNA polymerase 3 (RDR3).